Consider the following 209-residue polypeptide: MNAIAIGMIIFAYLCGSVSNAILICRLARLPDPRTSGSGNPGATNVLRLGGKLAAAGVMVFDVLKGMIPVWIGYGLGLPPFWLGLVAIAACLGHIYPIFFHFRGGKGVATALGAIAPIGYDLSGLMIGTWLLTALLSGYSSLGAIVSALIAPFYVWWFKPQFTFPVAMLSCLVLLRHHDNIQRLWHGQESRIWHRRQKDRDIDRQQSKH.

A run of 5 helical transmembrane segments spans residues Ile4 to Ile24, Leu53 to Gly75, Pro80 to Phe102, Leu112 to Leu132, and Gly138 to Phe158.

This sequence belongs to the PlsY family. As to quaternary structure, probably interacts with PlsX.

The protein localises to the cell inner membrane. It carries out the reaction an acyl phosphate + sn-glycerol 3-phosphate = a 1-acyl-sn-glycero-3-phosphate + phosphate. It participates in lipid metabolism; phospholipid metabolism. In terms of biological role, catalyzes the transfer of an acyl group from acyl-phosphate (acyl-PO(4)) to glycerol-3-phosphate (G3P) to form lysophosphatidic acid (LPA). This enzyme utilizes acyl-phosphate as fatty acyl donor, but not acyl-CoA or acyl-ACP. The chain is Glycerol-3-phosphate acyltransferase from Sodalis glossinidius (strain morsitans).